The chain runs to 176 residues: MNPLDKIHALDEIEKEIILCMQSAGQALQELGKEKSSQKNAETQSQQFLKSLSSVESKLSEQINYLTQVSTGQPHEGSGYASAKVLQMAWHRIQHARSRVRELEETKAKHSHAARQQLKRQQEHAAAQQQQQQQQQQQQQQQQMQQAAQQQQQQTGGGNAGSGDHPMGGDSSMSTN.

The interval 98 to 176 (SRVRELEETK…MGGDSSMSTN (79 aa)) is disordered. Positions 99 to 108 (RVRELEETKA) are enriched in basic and acidic residues. Over residues 124–154 (HAAAQQQQQQQQQQQQQQQQMQQAAQQQQQQ) the composition is skewed to low complexity.

It belongs to the Mediator complex subunit 11 family. In terms of assembly, component of the Mediator complex, which may include CDK8, MED4, MED6, MED11, MED14, MED17, MED18, MED20, MED21, MED22, MED27, MED28, MED30 and MED31.

The protein resides in the nucleus. Its function is as follows. Component of the Mediator complex, a coactivator involved in the regulated transcription of nearly all RNA polymerase II-dependent genes. Mediator functions as a bridge to convey information from gene-specific regulatory proteins to the basal RNA polymerase II transcription machinery. Mediator is recruited to promoters by direct interactions with regulatory proteins and serves as a scaffold for the assembly of a functional pre-initiation complex with RNA polymerase II and the general transcription factors. The protein is Mediator of RNA polymerase II transcription subunit 11 (MED11) of Drosophila melanogaster (Fruit fly).